We begin with the raw amino-acid sequence, 196 residues long: Small ribosomal subunit protein uS4C (196 aa).

The 63-residue stretch at 87–149 (CRLDNVVYRI…HRQNEMFSNN (63 aa)) folds into the S4 RNA-binding domain.

The protein belongs to the universal ribosomal protein uS4 family. Part of the 30S ribosomal subunit. Contacts protein S5. The interaction surface between S4 and S5 is involved in control of translational fidelity.

Its function is as follows. One of the primary rRNA binding proteins, it binds directly to 16S rRNA where it nucleates assembly of the body of the 30S subunit. With S5 and S12 plays an important role in translational accuracy. This chain is Small ribosomal subunit protein uS4C (rpsD3), found in Clostridium acetobutylicum (strain ATCC 824 / DSM 792 / JCM 1419 / IAM 19013 / LMG 5710 / NBRC 13948 / NRRL B-527 / VKM B-1787 / 2291 / W).